A 239-amino-acid polypeptide reads, in one-letter code: Uridylate kinase (239 aa).

10-13 (KFSG) contributes to the ATP binding site. Residues 18–23 (GENGFG) are involved in allosteric activation by GTP. A UMP-binding site is contributed by Gly-52. ATP is bound by residues Gly-53 and Arg-57. Residues Asp-73 and 134 to 141 (TGNPYFTT) contribute to the UMP site. ATP is bound by residues Thr-161, Tyr-167, and Asp-170.

The protein belongs to the UMP kinase family. In terms of assembly, homohexamer.

Its subcellular location is the cytoplasm. It carries out the reaction UMP + ATP = UDP + ADP. The protein operates within pyrimidine metabolism; CTP biosynthesis via de novo pathway; UDP from UMP (UMPK route): step 1/1. With respect to regulation, allosterically activated by GTP. Inhibited by UTP. Functionally, catalyzes the reversible phosphorylation of UMP to UDP. This chain is Uridylate kinase, found in Campylobacter jejuni subsp. jejuni serotype O:6 (strain 81116 / NCTC 11828).